The primary structure comprises 227 residues: PKHD-type hydroxylase Bamb_4192 (227 aa).

Positions 78 to 178 (KVFPPLFNRY…RVASFFWIQS (101 aa)) constitute a Fe2OG dioxygenase domain. Positions 96, 98, and 159 each coordinate Fe cation. Arg169 contacts 2-oxoglutarate.

It depends on Fe(2+) as a cofactor. Requires L-ascorbate as cofactor.

The polypeptide is PKHD-type hydroxylase Bamb_4192 (Burkholderia ambifaria (strain ATCC BAA-244 / DSM 16087 / CCUG 44356 / LMG 19182 / AMMD) (Burkholderia cepacia (strain AMMD))).